Here is a 130-residue protein sequence, read N- to C-terminus: uncharacterized protein (130 aa).

A signal peptide spans 1-19 (MLAPLFLCCLRNLFRKLIS).

It localises to the secreted. This is an uncharacterized protein from Homo sapiens (Human).